A 539-amino-acid polypeptide reads, in one-letter code: Phosphoenolpyruvate carboxykinase (ATP) (539 aa).

Substrate-binding residues include Arg64, Tyr206, and Lys212. Residues Lys212, His231, and Gly247–Thr255 each bind ATP. 2 residues coordinate Mn(2+): Lys212 and His231. Asp268 provides a ligand contact to Mn(2+). ATP contacts are provided by residues Glu296, Arg332, Arg448–Ile449, and Thr454. Position 332 (Arg332) interacts with substrate.

The protein belongs to the phosphoenolpyruvate carboxykinase (ATP) family. Monomer. The cofactor is Mn(2+).

It localises to the cytoplasm. The catalysed reaction is oxaloacetate + ATP = phosphoenolpyruvate + ADP + CO2. The protein operates within carbohydrate biosynthesis; gluconeogenesis. Functionally, involved in the gluconeogenesis. Catalyzes the conversion of oxaloacetate (OAA) to phosphoenolpyruvate (PEP) through direct phosphoryl transfer between the nucleoside triphosphate and OAA. This chain is Phosphoenolpyruvate carboxykinase (ATP), found in Salmonella choleraesuis (strain SC-B67).